Reading from the N-terminus, the 134-residue chain is MKDWLDEIHWNADGLVPAIAQDHETGRVLMMAWMNREALALTASENRAIYWSRSRGKLWRKGEESGHVQKLHELRLDCDADVVILMVEQVGGIACHTGRESCFYRVYENGDWKVVDPVLKDPDAIYEHAGHQHE.

Asp-77 contacts Mg(2+). Residue Cys-78 participates in Zn(2+) binding. The Mg(2+) site is built by Asp-79 and Asp-81. 2 residues coordinate Zn(2+): Cys-95 and Cys-102.

The protein belongs to the PRA-CH family. In terms of assembly, homodimer. It depends on Mg(2+) as a cofactor. The cofactor is Zn(2+).

It localises to the cytoplasm. The enzyme catalyses 1-(5-phospho-beta-D-ribosyl)-5'-AMP + H2O = 1-(5-phospho-beta-D-ribosyl)-5-[(5-phospho-beta-D-ribosylamino)methylideneamino]imidazole-4-carboxamide. Its pathway is amino-acid biosynthesis; L-histidine biosynthesis; L-histidine from 5-phospho-alpha-D-ribose 1-diphosphate: step 3/9. In terms of biological role, catalyzes the hydrolysis of the adenine ring of phosphoribosyl-AMP. This chain is Phosphoribosyl-AMP cyclohydrolase, found in Pseudomonas paraeruginosa (strain DSM 24068 / PA7) (Pseudomonas aeruginosa (strain PA7)).